A 343-amino-acid polypeptide reads, in one-letter code: Ribonucleoside-diphosphate reductase small subunit (343 aa).

Positions 101, 131, and 134 each coordinate Fe cation. Tyrosine 138 is a catalytic residue. Residues isoleucine 188–leucine 208 form a helical membrane-spanning segment. Glutamate 194, glutamate 228, and histidine 231 together coordinate Fe cation.

The protein belongs to the ribonucleoside diphosphate reductase small chain family. As to quaternary structure, heterotetramer composed of a homodimer of the large subunit (R1) and a homodimer of the small subunit (R2). Larger multisubunit protein complex are also active, composed of (R1)n(R2)n. Fe cation serves as cofactor.

It localises to the host membrane. It carries out the reaction a 2'-deoxyribonucleoside 5'-diphosphate + [thioredoxin]-disulfide + H2O = a ribonucleoside 5'-diphosphate + [thioredoxin]-dithiol. In terms of biological role, ribonucleoside-diphosphate reductase holoenzyme provides the precursors necessary for viral DNA synthesis. Allows virus growth in non-dividing cells, as well as reactivation from latency in infected hosts. Catalyzes the biosynthesis of deoxyribonucleotides from the corresponding ribonucleotides. In Gallid herpesvirus 2 (strain Chicken/Md5/ATCC VR-987) (GaHV-2), this protein is Ribonucleoside-diphosphate reductase small subunit.